The sequence spans 251 residues: Triosephosphate isomerase (251 aa).

A substrate-binding site is contributed by 9–11; sequence NWK. His95 acts as the Electrophile in catalysis. Glu167 functions as the Proton acceptor in the catalytic mechanism. Residues Gly173, Ser213, and 234–235 each bind substrate; that span reads GG.

Belongs to the triosephosphate isomerase family. In terms of assembly, homodimer.

It localises to the cytoplasm. The catalysed reaction is D-glyceraldehyde 3-phosphate = dihydroxyacetone phosphate. Its pathway is carbohydrate biosynthesis; gluconeogenesis. The protein operates within carbohydrate degradation; glycolysis; D-glyceraldehyde 3-phosphate from glycerone phosphate: step 1/1. Functionally, involved in the gluconeogenesis. Catalyzes stereospecifically the conversion of dihydroxyacetone phosphate (DHAP) to D-glyceraldehyde-3-phosphate (G3P). The protein is Triosephosphate isomerase of Geotalea uraniireducens (strain Rf4) (Geobacter uraniireducens).